Reading from the N-terminus, the 221-residue chain is Enolase-phosphatase E1 (221 aa).

It belongs to the HAD-like hydrolase superfamily. MasA/MtnC family. As to quaternary structure, monomer. Mg(2+) is required as a cofactor.

The catalysed reaction is 5-methylsulfanyl-2,3-dioxopentyl phosphate + H2O = 1,2-dihydroxy-5-(methylsulfanyl)pent-1-en-3-one + phosphate. The protein operates within amino-acid biosynthesis; L-methionine biosynthesis via salvage pathway; L-methionine from S-methyl-5-thio-alpha-D-ribose 1-phosphate: step 3/6. Its pathway is amino-acid biosynthesis; L-methionine biosynthesis via salvage pathway; L-methionine from S-methyl-5-thio-alpha-D-ribose 1-phosphate: step 4/6. In terms of biological role, bifunctional enzyme that catalyzes the enolization of 2,3-diketo-5-methylthiopentyl-1-phosphate (DK-MTP-1-P) into the intermediate 2-hydroxy-3-keto-5-methylthiopentenyl-1-phosphate (HK-MTPenyl-1-P), which is then dephosphorylated to form the acireductone 1,2-dihydroxy-3-keto-5-methylthiopentene (DHK-MTPene). This chain is Enolase-phosphatase E1, found in Hydrogenobaculum sp. (strain Y04AAS1).